A 445-amino-acid chain; its full sequence is 23S rRNA (uracil(1939)-C(5))-methyltransferase RlmD (445 aa).

A TRAM domain is found at 12-70 (SKQLSSKLSLKVTQLDHLGAGIAHHDGKIVFINGALPGETVSVQLTEQKKKFARAKLLK). The [4Fe-4S] cluster site is built by C83, C89, C92, and C171. S-adenosyl-L-methionine is bound by residues Q278, F307, N312, E328, D355, and D375. The active-site Nucleophile is the C401.

Belongs to the class I-like SAM-binding methyltransferase superfamily. RNA M5U methyltransferase family. RlmD subfamily.

The enzyme catalyses uridine(1939) in 23S rRNA + S-adenosyl-L-methionine = 5-methyluridine(1939) in 23S rRNA + S-adenosyl-L-homocysteine + H(+). Catalyzes the formation of 5-methyl-uridine at position 1939 (m5U1939) in 23S rRNA. The chain is 23S rRNA (uracil(1939)-C(5))-methyltransferase RlmD from Shewanella halifaxensis (strain HAW-EB4).